We begin with the raw amino-acid sequence, 346 residues long: Alkanal monooxygenase alpha chain (346 aa).

Heterodimer of an alpha and a beta chain.

It carries out the reaction a long-chain fatty aldehyde + FMNH2 + O2 = a long-chain fatty acid + hnu + FMN + H2O + 2 H(+). Its function is as follows. Light-emitting reaction in luminous bacteria. This chain is Alkanal monooxygenase alpha chain (luxA), found in Photobacterium phosphoreum.